A 145-amino-acid polypeptide reads, in one-letter code: D-aminoacyl-tRNA deacylase (145 aa).

The short motif at 137–138 is the Gly-cisPro motif, important for rejection of L-amino acids element; it reads GP.

The protein belongs to the DTD family. In terms of assembly, homodimer.

Its subcellular location is the cytoplasm. The catalysed reaction is glycyl-tRNA(Ala) + H2O = tRNA(Ala) + glycine + H(+). It catalyses the reaction a D-aminoacyl-tRNA + H2O = a tRNA + a D-alpha-amino acid + H(+). An aminoacyl-tRNA editing enzyme that deacylates mischarged D-aminoacyl-tRNAs. Also deacylates mischarged glycyl-tRNA(Ala), protecting cells against glycine mischarging by AlaRS. Acts via tRNA-based rather than protein-based catalysis; rejects L-amino acids rather than detecting D-amino acids in the active site. By recycling D-aminoacyl-tRNA to D-amino acids and free tRNA molecules, this enzyme counteracts the toxicity associated with the formation of D-aminoacyl-tRNA entities in vivo and helps enforce protein L-homochirality. The chain is D-aminoacyl-tRNA deacylase from Limosilactobacillus fermentum (strain NBRC 3956 / LMG 18251) (Lactobacillus fermentum).